Reading from the N-terminus, the 799-residue chain is ATP-dependent DNA helicase Hel308 (799 aa).

ATP contacts are provided by residues Gln-29 and 47-54 (IPTASGKT). A Helicase ATP-binding domain is found at 34–200 (EAGVTEGENL…WLDAGLVDSD (167 aa)). Positions 145–148 (DEVH) match the DEAH box motif. In terms of domain architecture, Helicase C-terminal spans 234–435 (QTAAIVRDTL…EPALRTHILA (202 aa)). 2 disordered regions span residues 522-566 (RGAS…DRDP) and 750-799 (NVLE…LGDF). Residues 553-566 (LAEDADESDADRDP) show a composition bias toward acidic residues.

Belongs to the helicase family. Hel308 subfamily. In terms of assembly, monomer.

It carries out the reaction Couples ATP hydrolysis with the unwinding of duplex DNA by translocating in the 3'-5' direction.. The enzyme catalyses ATP + H2O = ADP + phosphate + H(+). Functionally, DNA-dependent ATPase and 3'-5' DNA helicase that may be involved in repair of stalled replication forks. In Haloarcula marismortui (strain ATCC 43049 / DSM 3752 / JCM 8966 / VKM B-1809) (Halobacterium marismortui), this protein is ATP-dependent DNA helicase Hel308.